Here is a 25-residue protein sequence, read N- to C-terminus: uncharacterized protein (25 aa).

This is an uncharacterized protein from Archaeoglobus fulgidus (strain ATCC 49558 / DSM 4304 / JCM 9628 / NBRC 100126 / VC-16).